The chain runs to 314 residues: tRNA uridine(34) hydroxylase (314 aa).

A Rhodanese domain is found at 140-234 (ARDDVILIDT…YLEETPPDES (95 aa)). The active-site Cysteine persulfide intermediate is Cys194.

Belongs to the TrhO family.

It carries out the reaction uridine(34) in tRNA + AH2 + O2 = 5-hydroxyuridine(34) in tRNA + A + H2O. In terms of biological role, catalyzes oxygen-dependent 5-hydroxyuridine (ho5U) modification at position 34 in tRNAs. The sequence is that of tRNA uridine(34) hydroxylase from Acinetobacter baumannii (strain AYE).